Here is a 712-residue protein sequence, read N- to C-terminus: Frizzled-6 (712 aa).

The first 18 residues, 1–18 (MEMFTFLLTCVFLPFVRG), serve as a signal peptide directing secretion. Residues 19 to 132 (HSLFTCEPIT…CDRLQYCDET (114 aa)) form the FZ domain. Residues 19-201 (HSLFTCEPIT…SDELEFAKSF (183 aa)) are Extracellular-facing. Cystine bridges form between C24/C85, C32/C78, C69/C106, C95/C129, and C99/C123. N-linked (GlcNAc...) asparagine glycosylation occurs at N38. The chain crosses the membrane as a helical span at residues 202 to 222 (IGIVSIFCLCATLFTFLTFLI). Over 223-233 (DVKRFRYPERP) the chain is Cytoplasmic. Residues 234 to 254 (IIYYSVCYSIVSLMYFIGFLL) traverse the membrane as a helical segment. At 255 to 284 (GDRTACNKADEKLELGDTVVLGSQNKACTV) the chain is on the extracellular side. Residues 285 to 305 (LFMFLYFFTMAGTVWWVILTI) traverse the membrane as a helical segment. Residues 306 to 324 (TWFLAAGRKWSCEAIEQKA) are Cytoplasmic-facing. The chain crosses the membrane as a helical span at residues 325–345 (VWFHAVAWGIPGFLTVMLLAM). Topologically, residues 346–370 (NKVEGDNISGVCFVGLYDLDASRYF) are extracellular. N-linked (GlcNAc...) asparagine glycosylation occurs at N352. The chain crosses the membrane as a helical span at residues 371–391 (VLLPLCLCVFVGLSLLLAGII). The Cytoplasmic segment spans residues 392 to 416 (SLNHVRQVIQHDGRNQEKLKKFMIR). Residues 417 to 437 (IGVFSGLYLVPLVTLLGCYVY) form a helical membrane-spanning segment. Residues 438–473 (EQVNRITWEITWVSDHCRQYHIPCPYQAKTETRPEL) lie on the Extracellular side of the membrane. The helical transmembrane segment at 474 to 494 (ALFMIKYLMTLIVGISAVFWV) threads the bilayer. Residues 495-712 (GSKKTCTEWA…EHGTGSHSDT (218 aa)) are Cytoplasmic-facing. Positions 498–503 (KTCTEW) match the Lys-Thr-X-X-X-Trp motif, mediates interaction with the PDZ domain of Dvl family members motif. Positions 588 to 712 (EIQTSPETSV…EHGTGSHSDT (125 aa)) are disordered. 2 stretches are compositionally biased toward basic and acidic residues: residues 628-637 (LCEEQADRKG) and 652-664 (TRSE…KSDV). The span at 668-693 (GPMQSSSLQVPGSSEPGSLKGSTSLL) shows a compositional bias: polar residues. Residues 700 to 712 (GRKEHGTGSHSDT) are compositionally biased toward basic and acidic residues.

Belongs to the G-protein coupled receptor Fz/Smo family. In terms of assembly, interacts with LMBR1L. Ubiquitinated by ZNRF3, leading to its degradation by the proteasome.

The protein resides in the membrane. Its subcellular location is the cell membrane. It localises to the cell surface. The protein localises to the apical cell membrane. It is found in the cytoplasmic vesicle membrane. The protein resides in the endoplasmic reticulum membrane. Receptor for Wnt proteins. Most of frizzled receptors are coupled to the beta-catenin canonical signaling pathway, which leads to the activation of disheveled proteins, inhibition of GSK-3 kinase, nuclear accumulation of beta-catenin and activation of Wnt target genes. A second signaling pathway involving PKC and calcium fluxes has been seen for some family members, but it is not yet clear if it represents a distinct pathway or if it can be integrated in the canonical pathway, as PKC seems to be required for Wnt-mediated inactivation of GSK-3 kinase. Both pathways seem to involve interactions with G-proteins. Activation by Wnt5A stimulates PKC activity via a G-protein-dependent mechanism. Involved in transduction and intercellular transmission of polarity information during tissue morphogenesis and/or in differentiated tissues. Together with FZD3, is involved in the neural tube closure and plays a role in the regulation of the establishment of planar cell polarity (PCP), particularly in the orientation of asymmetric bundles of stereocilia on the apical faces of a subset of auditory and vestibular sensory cells located in the inner ear. This Canis lupus familiaris (Dog) protein is Frizzled-6 (FZD6).